We begin with the raw amino-acid sequence, 211 residues long: uncharacterized protein (211 aa).

6 consecutive transmembrane segments (helical) span residues tryptophan 21–isoleucine 38, tryptophan 53–valine 75, threonine 82–alanine 104, isoleucine 124–valine 146, proline 159–tyrosine 178, and alanine 188–tryptophan 210.

It is found in the cell membrane. This is an uncharacterized protein from Archaeoglobus fulgidus (strain ATCC 49558 / DSM 4304 / JCM 9628 / NBRC 100126 / VC-16).